Consider the following 374-residue polypeptide: Tryptophan--tRNA ligase (374 aa).

A 'HIGH' region motif is present at residues 81-89; that stretch reads PSGPVHIGH. Positions 258-262 match the 'KMSKS' region motif; it reads KMSAS.

Belongs to the class-I aminoacyl-tRNA synthetase family.

The protein resides in the cytoplasm. It carries out the reaction tRNA(Trp) + L-tryptophan + ATP = L-tryptophyl-tRNA(Trp) + AMP + diphosphate + H(+). In Pyrobaculum calidifontis (strain DSM 21063 / JCM 11548 / VA1), this protein is Tryptophan--tRNA ligase.